Consider the following 990-residue polypeptide: Nucleotide-binding leucine-rich repeat (NLR)-like protein (990 aa).

The tract at residues 22-304 (GWICAIPTEL…AVAAAYAKIL (283 aa)) is purine nucleoside phosphorylase domain. The NB-ARC domain occupies 334–563 (REEHLRQVLT…TISNYLEVYE (230 aa)). 6 TPR repeats span residues 732-765 (RDLLHNIGEYYYRTGKYREAEEFYWRALELKKLA), 774-807 (IGSMNNLAVVYERHGEYAKAESLQRQTLELMKQV), 816-849 (LGSMNNLALVYEQQGEYAEAEKLQQQTLELRKQA), 858-891 (LMSMNNLATIYEQQGEYAKAESLQRQTLELKQQT), 900-933 (LASMNNLALVYEHQGEYAKAETLYQQTLKLRKQV), and 942-975 (LQSMNNLAIVYRLQGKYIEAEGLQQQQQSQATLD). Positions 965 to 990 (QQQQQSQATLDEGRLSKPARKRRKKK) are disordered. Basic residues predominate over residues 981–990 (KPARKRRKKK).

The catalysed reaction is ATP + H2O = D-ribose 5-triphosphate + adenine. It catalyses the reaction dATP + H2O = 2-deoxyribose 5-triphosphate + adenine. The N-terminal purine nucleoside phosphorylase (PNP) domain cleaves the N-glycosidic bond of ATP, and to a lesser extent dATP; has very weak activity on adenosine and deoxyadenosine and no activity on (d)ADP or (d)AMP. In Hyaloscypha variabilis (strain UAMH 11265 / GT02V1 / F) (Meliniomyces variabilis), this protein is Nucleotide-binding leucine-rich repeat (NLR)-like protein.